The following is a 440-amino-acid chain: MKNYLSIGVIALLFALTFGTVKSVQAIAGYGWLPDRPPINNSQLVVSMAGIVEGTDKKVFINFFEIDLTSQPAHGGKTEQGLSPKSKPFATDNGAMPHKLEKADLLKAIQKQLIANVHSNDGYFEVIDFASDATITDRNGKVYFADKDGSVTLPTQPVQEFLLKGHVRVRPYKEKPVQNQAKSVDVEYTVQFTPLNPDDDFRPGLKDTKLLKTLAIGDTITSQELLAQAQSILNKTHPGYTIYERDSSIVTHDNDIFRTILPMDQEFTYHVKNREQAYEINPKTGIKEKTNNTDLVSEKYYVLKQGEKPYDPFDRSHLKLFTIKYVDVNTNELLKSEQLLTASERNLDFRDLYDPRDKAKLLYNNLDAFDIMDYTLTGKVEDNHDKNNRVVTVYMGKRPKGAKGSYHLAYDKDLYTEEERKAYSYLRDTGTPIPDNPKDK.

The N-terminal stretch at 1–26 (MKNYLSIGVIALLFALTFGTVKSVQA) is a signal peptide.

In terms of biological role, this protein is not a protease, but it activates plasminogen by complexing with it. As a potential virulence factor, it is thought to prevent the formation of effective fibrin barriers around the site of infection, thereby contributing to the invasiveness of the cells. This chain is Streptokinase A (ska), found in Streptococcus pyogenes serotype M1.